Reading from the N-terminus, the 163-residue chain is Ribonuclease P protein component (163 aa).

The tract at residues 1-68 is disordered; that stretch reads MDEKDVATQP…GGKLLSLKGD (68 aa). The segment covering 8-19 has biased composition (polar residues); the sequence is TQPQETGQNPRL.

It belongs to the RnpA family. Consists of a catalytic RNA component (M1 or rnpB) and a protein subunit.

The catalysed reaction is Endonucleolytic cleavage of RNA, removing 5'-extranucleotides from tRNA precursor.. In terms of biological role, RNaseP catalyzes the removal of the 5'-leader sequence from pre-tRNA to produce the mature 5'-terminus. It can also cleave other RNA substrates such as 4.5S RNA. The protein component plays an auxiliary but essential role in vivo by binding to the 5'-leader sequence and broadening the substrate specificity of the ribozyme. The chain is Ribonuclease P protein component from Thermus thermophilus (strain ATCC BAA-163 / DSM 7039 / HB27).